The chain runs to 313 residues: UDP-N-acetylenolpyruvoylglucosamine reductase (313 aa).

The FAD-binding PCMH-type domain maps to 31–207; that stretch reads VGGPADALVA…TGVDLGLGFD (177 aa). R180 is an active-site residue. C236 acts as the Proton donor in catalysis. E307 is an active-site residue.

The protein belongs to the MurB family. It depends on FAD as a cofactor.

Its subcellular location is the cytoplasm. The enzyme catalyses UDP-N-acetyl-alpha-D-muramate + NADP(+) = UDP-N-acetyl-3-O-(1-carboxyvinyl)-alpha-D-glucosamine + NADPH + H(+). Its pathway is cell wall biogenesis; peptidoglycan biosynthesis. In terms of biological role, cell wall formation. This is UDP-N-acetylenolpyruvoylglucosamine reductase from Desulfosudis oleivorans (strain DSM 6200 / JCM 39069 / Hxd3) (Desulfococcus oleovorans).